The chain runs to 253 residues: Tryptophan synthase alpha chain (253 aa).

Catalysis depends on proton acceptor residues E47 and D58.

The protein belongs to the TrpA family. In terms of assembly, tetramer of two alpha and two beta chains.

It catalyses the reaction (1S,2R)-1-C-(indol-3-yl)glycerol 3-phosphate + L-serine = D-glyceraldehyde 3-phosphate + L-tryptophan + H2O. Its pathway is amino-acid biosynthesis; L-tryptophan biosynthesis; L-tryptophan from chorismate: step 5/5. Its function is as follows. The alpha subunit is responsible for the aldol cleavage of indoleglycerol phosphate to indole and glyceraldehyde 3-phosphate. The chain is Tryptophan synthase alpha chain from Lactococcus lactis subsp. cremoris (strain MG1363).